A 265-amino-acid chain; its full sequence is Probable cyclic nucleotide phosphodiesterase SynWH7803_1390 (265 aa).

7 residues coordinate Fe cation: aspartate 9, histidine 11, aspartate 49, asparagine 86, histidine 157, histidine 196, and histidine 198. Residues histidine 11, aspartate 49, and 86–87 (NH) each bind AMP. Histidine 198 lines the AMP pocket.

Belongs to the cyclic nucleotide phosphodiesterase class-III family. It depends on Fe(2+) as a cofactor.

This is Probable cyclic nucleotide phosphodiesterase SynWH7803_1390 from Synechococcus sp. (strain WH7803).